The sequence spans 304 residues: Urease accessory protein UreD 2 (304 aa).

This sequence belongs to the UreD family. UreD, UreF and UreG form a complex that acts as a GTP-hydrolysis-dependent molecular chaperone, activating the urease apoprotein by helping to assemble the nickel containing metallocenter of UreC. The UreE protein probably delivers the nickel.

The protein localises to the cytoplasm. Its function is as follows. Required for maturation of urease via the functional incorporation of the urease nickel metallocenter. Functionally, disrupting the ure2 operon has no effect on urease activity or pathogen survival in BALB/c mice when administered orally. In Brucella abortus (strain 2308), this protein is Urease accessory protein UreD 2.